A 109-amino-acid polypeptide reads, in one-letter code: Latartoxin-2a (109 aa).

A signal peptide spans 1-19 (MKVLVIIALCLVAFQSALS). Positions 20–37 (KKIENFESYIEDLKSEAR) are cleaved as a propeptide — removed in mature form. Residues 34-37 (SEAR) carry the Processing quadruplet motif motif. Intrachain disulfides connect Cys-39-Cys-56, Cys-46-Cys-67, Cys-55-Cys-81, Cys-69-Cys-79, and Cys-72-Cys-93. Val-108 is modified (valine amide).

The protein belongs to the neurotoxin 19 (CSTX) family. 11 (latartoxin) subfamily. Contains 5 disulfide bonds. Post-translationally, cleavage of the propeptide depends on the processing quadruplet motif (XXXR, with at least one of X being E). In terms of tissue distribution, expressed by the venom gland.

It is found in the secreted. Functionally, insect toxin. Causes paralysis in larvae of C.vicina by depolarizing membranes at the neuromuscular junction. In Lachesana tarabaevi (Spider), this protein is Latartoxin-2a.